Consider the following 227-residue polypeptide: Arginine ABC transporter permease protein ArtM (227 aa).

The region spanning 13–209 is the ABC transmembrane type-1 domain; it reads IPTSLLLTVV…IITGIATLLL (197 aa). The next 5 helical transmembrane spans lie at 17 to 37, 51 to 71, 78 to 98, 155 to 175, and 188 to 208; these read LLLT…LTFL, LYLT…IYAG, IIDS…ALAL, IILV…DIMG, and LTIY…ATLL.

The protein belongs to the binding-protein-dependent transport system permease family. HisMQ subfamily. In terms of assembly, the complex is composed of two ATP-binding proteins (ArtP), two transmembrane proteins (ArtM and ArtQ) and a solute-binding protein (ArtI).

The protein localises to the cell inner membrane. In terms of biological role, part of the ABC transporter complex ArtPIQM involved in arginine transport. Probably responsible for the translocation of the substrate across the membrane. In Haemophilus influenzae (strain ATCC 51907 / DSM 11121 / KW20 / Rd), this protein is Arginine ABC transporter permease protein ArtM (artM).